The chain runs to 162 residues: Probable cytosine deaminase (162 aa).

Positions 8-132 (EKDLAYLREA…PLYINSRDIL (125 aa)) constitute a CMP/dCMP-type deaminase domain. Zn(2+) is bound at residue H59. E61 functions as the Proton donor in the catalytic mechanism. The Zn(2+) site is built by C87 and C90. D159 is a substrate binding site.

The protein belongs to the cytidine and deoxycytidylate deaminase family. In terms of assembly, homodimer. Zn(2+) is required as a cofactor.

The protein resides in the cytoplasm. It is found in the nucleus. The catalysed reaction is cytosine + H2O + H(+) = uracil + NH4(+). The protein operates within pyrimidine metabolism; UMP biosynthesis via salvage pathway; uracil from cytosine: step 1/1. Functionally, catalyzes the hydrolytic deamination of cytosine to uracil or 5-methylcytosine to thymine. Is involved in the pyrimidine salvage pathway, which allows the cell to utilize cytosine for pyrimidine nucleotide synthesis. This Schizosaccharomyces pombe (strain 972 / ATCC 24843) (Fission yeast) protein is Probable cytosine deaminase.